A 485-amino-acid polypeptide reads, in one-letter code: Signal recognition particle protein (485 aa).

Residues 107-114 (GLQGAGKT), 189-193 (DTAGR), and 247-250 (TKLD) contribute to the GTP site. The disordered stretch occupies residues 452–485 (GFGGGAPAPQPGFRGYGPPKKQKKGSKKKKGFGL). Residues 471–485 (KKQKKGSKKKKGFGL) show a composition bias toward basic residues.

Belongs to the GTP-binding SRP family. SRP54 subfamily. As to quaternary structure, part of the signal recognition particle protein translocation system, which is composed of SRP and FtsY.

It is found in the cytoplasm. It carries out the reaction GTP + H2O = GDP + phosphate + H(+). Involved in targeting and insertion of nascent membrane proteins into the cytoplasmic membrane. Binds to the hydrophobic signal sequence of the ribosome-nascent chain (RNC) as it emerges from the ribosomes. The SRP-RNC complex is then targeted to the cytoplasmic membrane where it interacts with the SRP receptor FtsY. This is Signal recognition particle protein from Synechococcus elongatus (strain ATCC 33912 / PCC 7942 / FACHB-805) (Anacystis nidulans R2).